The chain runs to 316 residues: Olfactory receptor 10H28 (316 aa).

Residues 1-26 (MPGQNYSTISEFILFGFSAFPHQMLP) are Extracellular-facing. N5 is a glycosylation site (N-linked (GlcNAc...) asparagine). The helical transmembrane segment at 27–47 (ALFLLYLLMYLFTLLGNLVIM) threads the bilayer. The Cytoplasmic portion of the chain corresponds to 48 to 57 (AAIWTEHRLH). Residues 58-78 (TPMYLFLCALSISEILFTVVI) traverse the membrane as a helical segment. The Extracellular portion of the chain corresponds to 79-100 (TPRMLSDMLSTHRSITFIACAN). Residues C98 and C190 are joined by a disulfide bond. The chain crosses the membrane as a helical span at residues 101 to 121 (QLFFSFTFGYTHSFLLVVMGY). Topologically, residues 122–144 (DRYVAICRPLHYHALMSLQGCAR) are cytoplasmic. A helical membrane pass occupies residues 145–165 (LVAWSWAGGSLIGMALTIIIF). Topologically, residues 166-207 (HLTFCESNVIHHILCHVFSLLKLACGERTAFVTIAVILVCVT) are extracellular. Residues 208 to 228 (PLIGCLVFIILSYIFIVAAIL) traverse the membrane as a helical segment. Residues 229–241 (RIPSTEGRHKTFS) are Cytoplasmic-facing. A helical transmembrane segment spans residues 242-262 (TCASHLTVVIVHYGFASIIYL). The Extracellular segment spans residues 263-273 (KSRGLYSQYTD). Residues 274 to 294 (TLMSTTYTVFTPFLSPIIFSL) traverse the membrane as a helical segment. Topologically, residues 295–316 (RNKELKNAIIKSFHRNVCQQSI) are cytoplasmic.

The protein belongs to the G-protein coupled receptor 1 family.

Its subcellular location is the cell membrane. In terms of biological role, odorant receptor. The chain is Olfactory receptor 10H28 from Mus musculus (Mouse).